Here is a 372-residue protein sequence, read N- to C-terminus: Spermidine/putrescine import ATP-binding protein PotA (372 aa).

The region spanning 12 to 250 (VSIRSVRKVY…PRNRFVADFI (239 aa)) is the ABC transporter domain. 48-55 (GPSGCGKT) provides a ligand contact to ATP.

It belongs to the ABC transporter superfamily. Spermidine/putrescine importer (TC 3.A.1.11.1) family. As to quaternary structure, the complex is composed of two ATP-binding proteins (PotA), two transmembrane proteins (PotB and PotC) and a solute-binding protein (PotD).

The protein localises to the cell inner membrane. It carries out the reaction ATP + H2O + polyamine-[polyamine-binding protein]Side 1 = ADP + phosphate + polyamineSide 2 + [polyamine-binding protein]Side 1.. Its function is as follows. Part of the ABC transporter complex PotABCD involved in spermidine/putrescine import. Responsible for energy coupling to the transport system. The sequence is that of Spermidine/putrescine import ATP-binding protein PotA from Pseudomonas fluorescens (strain ATCC BAA-477 / NRRL B-23932 / Pf-5).